A 436-amino-acid polypeptide reads, in one-letter code: GTPase Obg (436 aa).

Positions serine 2–leucine 160 constitute an Obg domain. Residues alanine 161–alanine 338 enclose the OBG-type G domain. Residues glycine 167 to serine 174, phenylalanine 192 to valine 196, aspartate 214 to glycine 217, asparagine 284 to aspartate 287, and serine 319 to isoleucine 321 contribute to the GTP site. Mg(2+) contacts are provided by serine 174 and threonine 194. The OCT domain occupies glycine 358–aspartate 436.

Belongs to the TRAFAC class OBG-HflX-like GTPase superfamily. OBG GTPase family. In terms of assembly, monomer. The cofactor is Mg(2+).

The protein resides in the cytoplasm. In terms of biological role, an essential GTPase which binds GTP, GDP and possibly (p)ppGpp with moderate affinity, with high nucleotide exchange rates and a fairly low GTP hydrolysis rate. Plays a role in control of the cell cycle, stress response, ribosome biogenesis and in those bacteria that undergo differentiation, in morphogenesis control. This is GTPase Obg from Streptococcus mutans serotype c (strain ATCC 700610 / UA159).